The chain runs to 187 residues: MGAANDAVDGRELMSAAVVGRTISRIAHQIIEKTALDSPDSPRVVLLGIPTRGVILASRLAANIGEYSGIEVDHGALDITLYRDDLMSKPPRPLEETEIPAGGVDDALVILVDDVLYSGRSVRSALDALRDVGRPRSVQLAVLVDRGHRELPVRADYVGKNVPTARSESVHVQFSEHDGHDGVVISR.

The PRPP-binding signature appears at 109–121 (VILVDDVLYSGRS).

Belongs to the purine/pyrimidine phosphoribosyltransferase family. PyrR subfamily.

The enzyme catalyses UMP + diphosphate = 5-phospho-alpha-D-ribose 1-diphosphate + uracil. In terms of biological role, regulates the transcription of the pyrimidine nucleotide (pyr) operon in response to exogenous pyrimidines. Its function is as follows. Also displays a weak uracil phosphoribosyltransferase activity which is not physiologically significant. The protein is Bifunctional protein PyrR of Mycobacterium ulcerans (strain Agy99).